The following is a 499-amino-acid chain: MIEPQNNKNINNNIYNNNNNNFKMNQDENQLILNSKQLLEKIKISKKKNPQLKFIRVCWIDISNKIRTKAINIDWILNHEPKLIHVSITNVCMSLLCFEDSVTIEALKSENFGEAFLIPITTTKLNILPYCPSHIQIFGEFFYLDNESKKLKPWLLCPRNSLQRAIDRLKNKFGISLKGSFEEEFYLIKKGDNNNSSVASLLNSIEKLDHGTFANYHSLDCYGDILEKITNALEEQGLPIEQLLSESGSGQFEITIDYTDIMEACDRHIIVRQTINSIASYNGYIATFIPKPFDGLVGSGCHAHLSLWDTNDSNLTPDANGECGLSLVNQFFIGGLLKHSKSLTALFNTTPNSYKRLKPFYWSGCNVSWGLDNKESFIRIPSSPFSATDGCSNFEIKTIDHTSNPYLAMAGIIHAGFDGIENSIAPPPPTSLFDQSVLNNQLIPSNFEDAIQSLKENHYLCENIGNDISNAFIHVKLAENKILKELSDDDQILKLLELF.

A GS beta-grasp domain is found at 50–146 (PQLKFIRVCW…IFGEFFYLDN (97 aa)). The 342-residue stretch at 158-499 (PRNSLQRAID…DQILKLLELF (342 aa)) folds into the GS catalytic domain.

This sequence belongs to the glutamine synthetase family.

The catalysed reaction is L-glutamate + NH4(+) + ATP = L-glutamine + ADP + phosphate + H(+). The chain is Type-1 glutamine synthetase 1 (glnA1) from Dictyostelium discoideum (Social amoeba).